The following is a 51-amino-acid chain: Large ribosomal subunit protein bL33 (51 aa).

A disordered region spans residues 1-21 (MRDKIKLESGAGTGHFYTTTK).

The protein belongs to the bacterial ribosomal protein bL33 family.

This is Large ribosomal subunit protein bL33 from Neisseria gonorrhoeae (strain ATCC 700825 / FA 1090).